The primary structure comprises 248 residues: tRNA N(3)-methylcytidine methyltransferase trm141 (248 aa).

Residues Trp-23, Tyr-27, Gly-63, Asp-86, Asp-112, and Ile-133 each coordinate S-adenosyl-L-methionine.

The protein belongs to the methyltransferase superfamily. METL family.

It localises to the cytoplasm. It is found in the nucleus. The enzyme catalyses cytidine(32) in tRNA(Ser) + S-adenosyl-L-methionine = N(3)-methylcytidine(32) in tRNA(Ser) + S-adenosyl-L-homocysteine + H(+). In terms of biological role, S-adenosyl-L-methionine-dependent methyltransferase that mediates N(3)-methylcytidine modification of residue 32 of the tRNA anticodon loop of tRNA(Ser). N(3)-methylcytidine methylation by trm141 requires the formation of N(6)-dimethylallyladenosine(37) (i6A37) by tit1 as prerequisite. Does not catalyze N(3)-methylcytidine modification of tRNA(Thr). The chain is tRNA N(3)-methylcytidine methyltransferase trm141 from Schizosaccharomyces pombe (strain 972 / ATCC 24843) (Fission yeast).